The sequence spans 1390 residues: ATPase family AAA domain-containing protein 2 (1390 aa).

The segment at 40 to 63 (RSAGAAQKKPAATTAKAGDGSSVK) is disordered. A compositionally biased stretch (low complexity) spans 42–57 (AGAAQKKPAATTAKAG). Residues S60 and S61 each carry the phosphoserine modification. Residue K125 forms a Glycyl lysine isopeptide (Lys-Gly) (interchain with G-Cter in SUMO2) linkage. A phosphoserine mark is found at S165 and S170. The segment at 216-380 (LNMYTRGKQK…HFERRRKRSR (165 aa)) is disordered. Residues 223-232 (KQKDIQRTDE) show a composition bias toward basic and acidic residues. A compositionally biased stretch (acidic residues) spans 244 to 288 (SSEEGEDQEHEDDGEDEDDEDDDDDDDDDDDDDDEDDEDEEDGEE). Residue K317 forms a Glycyl lysine isopeptide (Lys-Gly) (interchain with G-Cter in SUMO2) linkage. A phosphoserine mark is found at S327, S337, S342, and S410. 467-474 (GPPGTGKT) contacts ATP. Residues S746 and S751 each carry the phosphoserine modification. Coiled coils occupy residues 970-994 (LTAE…IFLR) and 1086-1112 (YAII…KKRG). The region spanning 980 to 1092 (EQEEDTFREL…DTAYAIIKEE (113 aa)) is the Bromo domain. A disordered region spans residues 1124 to 1163 (HVMPKQNSTLVGDKRSDPEQNEKLKTPSTPVACSTPAQLK). A Glycyl lysine isopeptide (Lys-Gly) (interchain with G-Cter in SUMO2) cross-link involves residue K1128. The segment covering 1135–1148 (GDKRSDPEQNEKLK) has biased composition (basic and acidic residues). S1139 carries the phosphoserine modification. K1148 participates in a covalent cross-link: Glycyl lysine isopeptide (Lys-Gly) (interchain with G-Cter in SUMO2). 3 positions are modified to phosphothreonine: T1149, T1152, and T1176. Residues 1149-1160 (TPSTPVACSTPA) are compositionally biased toward polar residues. Positions 1181-1242 (RKISQAKDDS…SESKLELRNN (62 aa)) are disordered. Basic and acidic residues predominate over residues 1185–1200 (QAKDDSQNAIDHKIES). Phosphoserine is present on residues S1200, S1233, and S1235. Polar residues predominate over residues 1229 to 1242 (QQNASESKLELRNN). K1236 participates in a covalent cross-link: Glycyl lysine isopeptide (Lys-Gly) (interchain with G-Cter in SUMO2). A phosphoserine mark is found at S1243 and S1302. T1323 is modified (phosphothreonine).

It belongs to the AAA ATPase family. Interacts with ESR1 and NCOA3 and these interactions are enhanced by estradiol. Interacts with acetylated lysine residues on histone H1.4, H2A, H2B and H3 (in vitro). In terms of tissue distribution, highly expressed in estrogen receptor positive breast tumors and in osteosarcoma tumors.

Its subcellular location is the nucleus. The catalysed reaction is ATP + H2O = ADP + phosphate + H(+). Functionally, may be a transcriptional coactivator of the nuclear receptor ESR1 required to induce the expression of a subset of estradiol target genes, such as CCND1, MYC and E2F1. May play a role in the recruitment or occupancy of CREBBP at some ESR1 target gene promoters. May be required for histone hyperacetylation. Involved in the estrogen-induced cell proliferation and cell cycle progression of breast cancer cells. The protein is ATPase family AAA domain-containing protein 2 (ATAD2) of Homo sapiens (Human).